The primary structure comprises 562 residues: Ribonuclease Y (562 aa).

The helical transmembrane segment at 1 to 21 (MNMLYFVLALLVGLAGGFFVG) threads the bilayer. Residues 108–129 (AAQDAARERETLSADRQETRRE) are disordered. Positions 252–312 (SVSVVPIPND…VRREVARHVL (61 aa)) constitute a KH domain. The region spanning 378–471 (VLKHSVQVAH…VAAADAISAA (94 aa)) is the HD domain.

The protein belongs to the RNase Y family.

Its subcellular location is the cell membrane. Endoribonuclease that initiates mRNA decay. The protein is Ribonuclease Y of Deinococcus geothermalis (strain DSM 11300 / CIP 105573 / AG-3a).